We begin with the raw amino-acid sequence, 534 residues long: MADTACLALRLLAALREEEARAVEELLRLGADPNLVLDDGAAAVHLAARASHPRALHCLRMLLRWGADPNARSAEGLTPVHVAAAWGCCGALELLLSRGGDPTLRDQDGLRPLDWALQQRHHNCARVLQELDTPTQPDETREPTETFHVAQGSFETETCQGPALAESSGVSQDSELHVHRAELEVEAVEVAVHPQSSEATENSDYSSDASFVTAVEDSLQPGRPGGALELVAGLWVTRGAVSAGKGAPNCQPQVLTLTARDTDKPVLPGDGDLGALHPHSSVPPMSDLQLLQALRALGYSPGPVTPFTRGHYLRRLQEAQASRADVGHSQELAEALRTGTIPDCQVDEEALAQCFQRLDPLKKWREGITKSSFTYLLLDPRLTKDLPARASSLTLAECLQCFVRAIFYVGKGTRARPDAHLWEAFGYHDQPRKQVCPKVRRILDIWASGRGIISLHCFQHVVAMEAYTREACLLDALGLQTLTNQKQGHYYGVVAHWPPSRRRRLGVHLLQRALLVFLAEGERELRPQDIQARG.

4 ANK repeats span residues 4-35, 39-71, 75-104, and 108-137; these read TACL…DPNL, DGAA…DPNA, EGLT…DPTL, and DGLR…PTQP. An LEM domain is found at 279–323; it reads HSSVPPMSDLQLLQALRALGYSPGPVTPFTRGHYLRRLQEAQASR. One can recognise a GIY-YIG domain in the interval 370-485; the sequence is KSSFTYLLLD…ALGLQTLTNQ (116 aa). Positions 498–505 match the Nuclear localization signal motif; that stretch reads PPSRRRRL.

Interacts (via LEM domain) with BANF1; the interaction may favor BANF1 dimerization. Predominantly expressed in bone marrow, spleen, thymus, colon and ovary. Expressed also to a lesser extent in lymph nodes, liver and testis.

It localises to the cytoplasm. Its subcellular location is the nucleus. In terms of biological role, endonuclease that probably plays a role in the DNA damage response and DNA repair. The protein is Ankyrin repeat and LEM domain-containing protein 1 of Mus musculus (Mouse).